Reading from the N-terminus, the 175-residue chain is Respiratory supercomplex factor 1-B, mitochondrial (175 aa).

An HIG1 domain is found at 3–94 (DQADVLADPD…TERKQRREFE (92 aa)). Transmembrane regions (helical) follow at residues 30-46 (PLIP…LYRA) and 66-83 (IYAQ…GMYY). Residues 83-115 (YKTERKQRREFEKKVEERKAQEKRDAWLRELEA) adopt a coiled-coil conformation.

This sequence belongs to the RCF1 family. As to quaternary structure, associates with the respiratory chain complex III/complex IV supercomplex.

It is found in the mitochondrion membrane. Cytochrome c oxidase subunit which plays a role in assembly of respiratory supercomplexes. This is Respiratory supercomplex factor 1-B, mitochondrial (rcf1-B) from Talaromyces marneffei (strain ATCC 18224 / CBS 334.59 / QM 7333) (Penicillium marneffei).